The sequence spans 506 residues: Glutamate--tRNA ligase (506 aa).

Residues 23 to 33 (PSPTGTPHVGL) carry the 'HIGH' region motif. The short motif at 267–271 (KLSKR) is the 'KMSKS' region element. Lysine 270 provides a ligand contact to ATP.

Belongs to the class-I aminoacyl-tRNA synthetase family. Glutamate--tRNA ligase type 1 subfamily. In terms of assembly, monomer.

It is found in the cytoplasm. It catalyses the reaction tRNA(Glu) + L-glutamate + ATP = L-glutamyl-tRNA(Glu) + AMP + diphosphate. Functionally, catalyzes the attachment of glutamate to tRNA(Glu) in a two-step reaction: glutamate is first activated by ATP to form Glu-AMP and then transferred to the acceptor end of tRNA(Glu). The sequence is that of Glutamate--tRNA ligase from Clavibacter sepedonicus (Clavibacter michiganensis subsp. sepedonicus).